Reading from the N-terminus, the 513-residue chain is Mannosyl-oligosaccharide alpha-1,2-mannosidase 1B (513 aa).

Residues Met1–Ala21 form the signal peptide. 8 N-linked (GlcNAc...) asparagine glycosylation sites follow: Asn97, Asn117, Asn150, Asn184, Asn251, Asn322, Asn348, and Asn368. A disulfide bridge links Cys334 with Cys363. Catalysis depends on Glu377, which acts as the Proton donor. Residue Thr503 participates in Ca(2+) binding.

This sequence belongs to the glycosyl hydrolase 47 family. In terms of assembly, monomer. The cofactor is Ca(2+). Mg(2+) serves as cofactor.

It localises to the cytoplasmic vesicle lumen. The catalysed reaction is N(4)-(alpha-D-Man-(1-&gt;2)-alpha-D-Man-(1-&gt;2)-alpha-D-Man-(1-&gt;3)-[alpha-D-Man-(1-&gt;2)-alpha-D-Man-(1-&gt;3)-[alpha-D-Man-(1-&gt;2)-alpha-D-Man-(1-&gt;6)]-alpha-D-Man-(1-&gt;6)]-beta-D-Man-(1-&gt;4)-beta-D-GlcNAc-(1-&gt;4)-beta-D-GlcNAc)-L-asparaginyl-[protein] (N-glucan mannose isomer 9A1,2,3B1,2,3) + 4 H2O = N(4)-(alpha-D-Man-(1-&gt;3)-[alpha-D-Man-(1-&gt;3)-[alpha-D-Man-(1-&gt;6)]-alpha-D-Man-(1-&gt;6)]-beta-D-Man-(1-&gt;4)-beta-D-GlcNAc-(1-&gt;4)-beta-D-GlcNAc)-L-asparaginyl-[protein] (N-glucan mannose isomer 5A1,2) + 4 beta-D-mannose. The enzyme catalyses N(4)-(alpha-D-Man-(1-&gt;2)-alpha-D-Man-(1-&gt;2)-alpha-D-Man-(1-&gt;3)-[alpha-D-Man-(1-&gt;3)-[alpha-D-Man-(1-&gt;2)-alpha-D-Man-(1-&gt;6)]-alpha-D-Man-(1-&gt;6)]-beta-D-Man-(1-&gt;4)-beta-D-GlcNAc-(1-&gt;4)-beta-D-GlcNAc)-L-asparaginyl-[protein] (N-glucan mannose isomer 8A1,2,3B1,3) + 3 H2O = N(4)-(alpha-D-Man-(1-&gt;3)-[alpha-D-Man-(1-&gt;3)-[alpha-D-Man-(1-&gt;6)]-alpha-D-Man-(1-&gt;6)]-beta-D-Man-(1-&gt;4)-beta-D-GlcNAc-(1-&gt;4)-beta-D-GlcNAc)-L-asparaginyl-[protein] (N-glucan mannose isomer 5A1,2) + 3 beta-D-mannose. Its pathway is protein modification; protein glycosylation. Its function is as follows. Involved in the maturation of Asn-linked oligosaccharides. Progressively trims alpha-1,2-linked mannose residues from Man(9)GlcNAc(2) to produce Man(5)GlcNAc(2). This is Mannosyl-oligosaccharide alpha-1,2-mannosidase 1B (mns1B) from Aspergillus phoenicis (Aspergillus saitoi).